The sequence spans 414 residues: Succinylornithine transaminase (414 aa).

Lys260 carries the N6-(pyridoxal phosphate)lysine modification.

Belongs to the class-III pyridoxal-phosphate-dependent aminotransferase family. AstC subfamily. It depends on pyridoxal 5'-phosphate as a cofactor.

The enzyme catalyses N(2)-succinyl-L-ornithine + 2-oxoglutarate = N-succinyl-L-glutamate 5-semialdehyde + L-glutamate. It functions in the pathway amino-acid degradation; L-arginine degradation via AST pathway; L-glutamate and succinate from L-arginine: step 3/5. Functionally, catalyzes the transamination of N(2)-succinylornithine and alpha-ketoglutarate into N(2)-succinylglutamate semialdehyde and glutamate. Can also act as an acetylornithine aminotransferase. This Yersinia pseudotuberculosis serotype I (strain IP32953) protein is Succinylornithine transaminase.